A 408-amino-acid polypeptide reads, in one-letter code: PCI domain-containing protein 2 (408 aa).

Position 2 is an N-acetylalanine (Ala-2). At Ser-45 the chain carries Phosphoserine. The region spanning 210–400 (VTYRYYVGRK…QKLVVSKQNP (191 aa)) is the PCI domain.

The protein belongs to the CSN12 family. In terms of assembly, component of the nuclear pore complex (NPC)-associated TREX-2 complex (transcription and export complex 2), composed of at least GANP, 2 copies of ENY2, PCID2, SEM1/DSS1, and either centrin CETN2 or centrin CETN3. The TREX-2 complex also associates with ALYREF/ALY and with the nucleoporin NUP153. Interacts with BRCA2. Interacts with SRCAP chromatin remodeling complex component ZNHIT1; the interaction results in inhibition of SRCAP complex activity, preventing the deposition of histone variant H2AZ1/H2A.Z to lymphoid fate regulator genes and restricting lymphoid lineage commitment.

It localises to the cytoplasm. The protein resides in the nucleus. The protein localises to the nuclear pore complex. Its function is as follows. Required for B-cell survival through the regulation of the expression of cell-cycle checkpoint MAD2L1 protein during B cell differentiation. As a component of the TREX-2 complex, involved in the export of mRNAs to the cytoplasm through the nuclear pores. Binds and stabilizes BRCA2 and is thus involved in the control of R-loop-associated DNA damage and transcription-associated genomic instability. Blocks the activity of the SRCAP chromatin remodeling complex by interacting with SRCAP complex member ZNHIT1 and inhibiting its interaction with the complex. This prevents the deposition of histone variant H2AZ1/H2A.Z at the nucleosomes of key lymphoid fate regulator genes which suppresses their expression and restricts lymphoid lineage commitment. The chain is PCI domain-containing protein 2 (PCID2) from Bos taurus (Bovine).